Consider the following 440-residue polypeptide: Xylose isomerase (440 aa).

Catalysis depends on residues histidine 101 and aspartate 104. 7 residues coordinate Mg(2+): glutamate 232, glutamate 268, histidine 271, aspartate 296, aspartate 307, aspartate 309, and aspartate 339.

It belongs to the xylose isomerase family. As to quaternary structure, homotetramer. Requires Mg(2+) as cofactor.

Its subcellular location is the cytoplasm. It catalyses the reaction alpha-D-xylose = alpha-D-xylulofuranose. The polypeptide is Xylose isomerase (Escherichia fergusonii (strain ATCC 35469 / DSM 13698 / CCUG 18766 / IAM 14443 / JCM 21226 / LMG 7866 / NBRC 102419 / NCTC 12128 / CDC 0568-73)).